The following is a 96-amino-acid chain: uncharacterized protein (96 aa).

Helical transmembrane passes span 27-47 (LAFR…ALLI) and 50-70 (LSGV…SIVF).

It localises to the cell membrane. This is an uncharacterized protein from Haemophilus influenzae (strain ATCC 51907 / DSM 11121 / KW20 / Rd).